A 919-amino-acid polypeptide reads, in one-letter code: MDYKNTLNLPKTSFPMKANLVNKEKVFLEEWEKMDLYNYVLEQRKGKPLFVLHDGPPYANGHIHIGTALNKILKDIVVKYKTMRGYRAPYVPGWDTHGLPIEHRVSQELGEKIKEMSPAEIRKKCEEFALRFVDIQREEFKRLGVRGDWENPYITLKPDYEVKILDVFKTLVEEGNVYRSLKPIYWCPRCRTALAEAEIEYHDHKSPSIYVKFRSKEDPNFFIVIWTTTPWTLPANVGIALHPDYEYSVVKVGEEKWVIATDLLDAFSKETGIDCSNVVEKIKGKDLEGKEFVHPIFDDKTSRVILADYVSLETGTGCVHIAPGHGEEDYIYGHVQYGLPIVSPVDEEGRFTEEAGKYKGMFIEDANEVIIEDLKKKGILVHASSITHSYPHCWRCKGPVIFRATEQWFISVDHNNLRQKVLEEIDKVKWIPEWGRNRIRSMVEERPDWCISRQRVWGTPIPAVKCKECGEVTLDPKVIEHFMKIVEKEGTNAWFEKEVEELIPEDFVCPKCGKRSFEKMLDTLDVWIDSGASFEYITTKREDHPFPLDMYLEGSDQHRGWFHSSIFLAVAKRGSAPYKEVLTHGFIKDEQGRKMSKSLGNVVDPMEVVEKYGAEILRLWLASSDYFNDIKISMRIVEQQTEVYRKIRNTFRFLLGNLEGFDPELDRVPYEKLLTIDRWALGRLQEIIKRATEYYDSYEFSKVYNLVVKYCTTELSSLYLDVVKDRLYVEAKDSIYRRSAQTVMHEILIALMKILAPIMTFTMEEVYSHLHEKDRKYKTVQAEYWPEYKEEFIDRELMEDFEKLLSIREDVLKALEEKRQQDVIGHSLDAEVVLVPKNDTIKALLEKYRDILEELFIVSKVSLSDASGELKGELVEVTVKHAEGEKCQRCWKYTTEISTSEDFPGVCPRCLAVLKGERK.

Positions 57–67 (PYANGHIHIGT) match the 'HIGH' region motif. Glutamate 553 serves as a coordination point for L-isoleucyl-5'-AMP. The short motif at 594–598 (KMSKS) is the 'KMSKS' region element. Lysine 597 is a binding site for ATP. Residues cysteine 887, cysteine 890, cysteine 907, and cysteine 910 each coordinate Zn(2+).

It belongs to the class-I aminoacyl-tRNA synthetase family. IleS type 1 subfamily. In terms of assembly, monomer. It depends on Zn(2+) as a cofactor.

Its subcellular location is the cytoplasm. It catalyses the reaction tRNA(Ile) + L-isoleucine + ATP = L-isoleucyl-tRNA(Ile) + AMP + diphosphate. Functionally, catalyzes the attachment of isoleucine to tRNA(Ile). As IleRS can inadvertently accommodate and process structurally similar amino acids such as valine, to avoid such errors it has two additional distinct tRNA(Ile)-dependent editing activities. One activity is designated as 'pretransfer' editing and involves the hydrolysis of activated Val-AMP. The other activity is designated 'posttransfer' editing and involves deacylation of mischarged Val-tRNA(Ile). This Thermotoga petrophila (strain ATCC BAA-488 / DSM 13995 / JCM 10881 / RKU-1) protein is Isoleucine--tRNA ligase.